Here is an 84-residue protein sequence, read N- to C-terminus: U21-theraphotoxin-Cg1b (84 aa).

Residues 1–21 (MKVSVLITLAVLGVMFLLTSA) form the signal peptide. A propeptide spanning residues 22-47 (EERGSDQMDSPAWLKSMERIFQSEER) is cleaved from the precursor. Cystine bridges form between C49/C63, C56/C68, and C62/C76. Position 82 is a phenylalanine amide (F82).

The protein belongs to the neurotoxin 10 (Hwtx-1) family. 05 (F4a) subfamily. Expressed by the venom gland.

The protein resides in the secreted. Its function is as follows. Probable ion channel inhibitor. The sequence is that of U21-theraphotoxin-Cg1b from Chilobrachys guangxiensis (Chinese earth tiger tarantula).